A 431-amino-acid polypeptide reads, in one-letter code: Glutamate--tRNA ligase 2 (431 aa).

Residues 6 to 16 (PSPTGDMHIGN) carry the 'HIGH' region motif. Positions 235-239 (KMSKR) match the 'KMSKS' region motif. An ATP-binding site is contributed by Lys-238.

This sequence belongs to the class-I aminoacyl-tRNA synthetase family. Glutamate--tRNA ligase type 1 subfamily. Monomer.

It is found in the cytoplasm. It catalyses the reaction tRNA(Glu) + L-glutamate + ATP = L-glutamyl-tRNA(Glu) + AMP + diphosphate. Its function is as follows. Catalyzes the attachment of glutamate to tRNA(Glu) in a two-step reaction: glutamate is first activated by ATP to form Glu-AMP and then transferred to the acceptor end of tRNA(Glu). The polypeptide is Glutamate--tRNA ligase 2 (Campylobacter jejuni subsp. doylei (strain ATCC BAA-1458 / RM4099 / 269.97)).